A 363-amino-acid polypeptide reads, in one-letter code: Phosphoserine aminotransferase (363 aa).

R41 contacts L-glutamate. Residues 75-76 (AS), W100, T155, D175, and Q198 contribute to the pyridoxal 5'-phosphate site. N6-(pyridoxal phosphate)lysine is present on K199. 239–240 (NT) provides a ligand contact to pyridoxal 5'-phosphate.

This sequence belongs to the class-V pyridoxal-phosphate-dependent aminotransferase family. SerC subfamily. In terms of assembly, homodimer. Pyridoxal 5'-phosphate serves as cofactor.

Its subcellular location is the cytoplasm. The enzyme catalyses O-phospho-L-serine + 2-oxoglutarate = 3-phosphooxypyruvate + L-glutamate. It carries out the reaction 4-(phosphooxy)-L-threonine + 2-oxoglutarate = (R)-3-hydroxy-2-oxo-4-phosphooxybutanoate + L-glutamate. It functions in the pathway amino-acid biosynthesis; L-serine biosynthesis; L-serine from 3-phospho-D-glycerate: step 2/3. In terms of biological role, catalyzes the reversible conversion of 3-phosphohydroxypyruvate to phosphoserine and of 3-hydroxy-2-oxo-4-phosphonooxybutanoate to phosphohydroxythreonine. The polypeptide is Phosphoserine aminotransferase (Streptococcus suis (strain 98HAH33)).